The primary structure comprises 420 residues: UDP-N-acetylglucosamine 1-carboxyvinyltransferase (420 aa).

Lys-22 to Asn-23 is a phosphoenolpyruvate binding site. Arg-93 provides a ligand contact to UDP-N-acetyl-alpha-D-glucosamine. Cys-117 (proton donor) is an active-site residue. At Cys-117 the chain carries 2-(S-cysteinyl)pyruvic acid O-phosphothioketal. Residues Asp-307 and Ile-329 each contribute to the UDP-N-acetyl-alpha-D-glucosamine site.

It belongs to the EPSP synthase family. MurA subfamily.

It is found in the cytoplasm. It catalyses the reaction phosphoenolpyruvate + UDP-N-acetyl-alpha-D-glucosamine = UDP-N-acetyl-3-O-(1-carboxyvinyl)-alpha-D-glucosamine + phosphate. It participates in cell wall biogenesis; peptidoglycan biosynthesis. Functionally, cell wall formation. Adds enolpyruvyl to UDP-N-acetylglucosamine. The sequence is that of UDP-N-acetylglucosamine 1-carboxyvinyltransferase from Alcanivorax borkumensis (strain ATCC 700651 / DSM 11573 / NCIMB 13689 / SK2).